Reading from the N-terminus, the 456-residue chain is Decaprenyl-diphosphate synthase (456 aa).

Residues lysine 183, arginine 186, and histidine 216 each coordinate isopentenyl diphosphate. The Mg(2+) site is built by aspartate 223 and aspartate 227. Residue arginine 233 participates in isopentenyl diphosphate binding.

Belongs to the FPP/GGPP synthase family. Mg(2+) serves as cofactor.

It is found in the mitochondrion. The enzyme catalyses 7 isopentenyl diphosphate + (2E,6E)-farnesyl diphosphate = all-trans-decaprenyl diphosphate + 7 diphosphate. The protein operates within cofactor biosynthesis; ubiquinone biosynthesis. Functionally, supplies decaprenyl diphosphate, the precursor for the side chain of the isoprenoid quinones ubiquinone-10. The protein is Decaprenyl-diphosphate synthase (coq1) of Dictyostelium discoideum (Social amoeba).